The chain runs to 490 residues: Betaine aldehyde dehydrogenase (490 aa).

Positions 26 and 93 each coordinate K(+). Residue 150 to 152 (GAW) coordinates NAD(+). Lys-162 serves as the catalytic Charge relay system. 176–179 (KPSE) contributes to the NAD(+) binding site. Val-180 is a binding site for K(+). 230–233 (GVAT) is an NAD(+) binding site. Leu-246 contacts K(+). Glu-252 (proton acceptor) is an active-site residue. Positions 254, 286, and 387 each coordinate NAD(+). Cys-286 (nucleophile) is an active-site residue. A Cysteine sulfenic acid (-SOH) modification is found at Cys-286. 2 residues coordinate K(+): Lys-457 and Gly-460. Glu-464 acts as the Charge relay system in catalysis.

It belongs to the aldehyde dehydrogenase family. In terms of assembly, dimer of dimers. K(+) serves as cofactor.

The catalysed reaction is betaine aldehyde + NAD(+) + H2O = glycine betaine + NADH + 2 H(+). Its pathway is amine and polyamine biosynthesis; betaine biosynthesis via choline pathway; betaine from betaine aldehyde: step 1/1. In terms of biological role, involved in the biosynthesis of the osmoprotectant glycine betaine. Catalyzes the irreversible oxidation of betaine aldehyde to the corresponding acid. In Stenotrophomonas maltophilia (strain R551-3), this protein is Betaine aldehyde dehydrogenase.